The sequence spans 217 residues: NADPH-dependent 3-demethoxyubiquinone 3-hydroxylase, mitochondrial (217 aa).

A mitochondrion-targeting transit peptide spans 1–34; sequence MSCARALAACCLWRLRTGALQPLSAYGRRISVRF. 2 tandem repeats follow at residues 48 to 129 and 130 to 217. The segment at 48 to 217 is 2 X approximate tandem repeats; sequence AVDRIIRVDH…KVAIYLSERL (170 aa). Arg51 is a binding site for NADH. Positions 60, 90, 93, 142, 178, and 181 each coordinate Fe cation. Positions 208, 212, and 216 each coordinate NADH.

It belongs to the COQ7 family. As to quaternary structure, component of a multi-subunit COQ enzyme complex. Interacts with COQ8B and COQ6. Interacts with COQ9. It depends on Fe cation as a cofactor.

The protein localises to the mitochondrion inner membrane. The enzyme catalyses a 5-methoxy-2-methyl-3-(all-trans-polyprenyl)benzoquinone + NADH + O2 = a 3-demethylubiquinone + NAD(+) + H2O. The protein operates within cofactor biosynthesis; ubiquinone biosynthesis. In terms of biological role, catalyzes the hydroxylation of the 5-methoxy-2-methyl-3-(all-trans-polyprenyl)benzoquinone at the C6 position and participates in the biosynthesis of ubiquinone. Catalyzes the reaction through a substrate-mediated reduction pathway, whereby NADH shuttles electrons to 5-methoxy-2-methyl-3-(all-trans-decaprenyl)benzoquinone, which then transfers the electrons to the two Fe(3+) centers. The binding of 5-methoxy-2-methyl-3-(all-trans-polyprenyl)benzoquinone (DMQn) mediates reduction of the diiron center by nicotinamide adenine dinucleotide (NADH) and initiates oxygen activation for subsequent DMQ hydroxylation. The physiological substrates are 5-methoxy-2-methyl-3-(all-trans-nonaprenyl)benzoquinone (DMQ(9)) and 5-methoxy-2-methyl-3-(all-trans-decaprenyl)benzoquinone (DMQ(10)), however in vitro the enzyme does not have any specificity concerning the length of the polyprenyl tail, and accepts tails of various lengths with similar efficiency. Also has a structural role in the COQ enzyme complex, stabilizing other COQ polypeptides. Involved in lifespan determination in a ubiquinone-independent manner. Plays a role in modulating mitochondrial stress responses, acting in the nucleus, perhaps via regulating gene expression, independent of its characterized mitochondrial function in ubiquinone biosynthesis. The sequence is that of NADPH-dependent 3-demethoxyubiquinone 3-hydroxylase, mitochondrial from Bos taurus (Bovine).